The following is a 549-amino-acid chain: RNA-induced transcriptional silencing complex protein tas3 (549 aa).

Disordered stretches follow at residues 89–111 (KNSP…VRAS), 126–184 (DGKE…SDSI), 202–225 (IRSS…SSKS), 298–361 (LDNF…HLEK), and 381–430 (AHFH…PLAS). Positions 298–307 (LDNFNRPSQQ) are enriched in polar residues. 2 stretches are compositionally biased toward basic and acidic residues: residues 328-361 (YDSY…HLEK) and 403-416 (SDRQ…ELPT). The span at 419–430 (LNASDSHNPLAS) shows a compositional bias: polar residues.

In terms of assembly, ago1, chp1 and tas3 interact to form the core of the RNA-induced transcriptional silencing (RITS) complex. The RITS complex interacts with the RDRC complex via interaction between ago1 and hrr1. Clr4 has a role in mediating this interaction.

Its subcellular location is the nucleus. It localises to the cytoplasm. It is found in the cytoskeleton. The protein localises to the microtubule organizing center. The protein resides in the spindle pole body. Functionally, has a role in the RNA interference (RNAi) pathway which is important for heterochromatin formation and accurate chromosome segregation. A member of the RNA-induced transcriptional silencing (RITS) complex which is involved in the biosynthesis of dsRNA from primer siRNAs provided by the RNA-directed RNA polymerase (RDRC) complex. The sequence is that of RNA-induced transcriptional silencing complex protein tas3 (tas3) from Schizosaccharomyces pombe (strain 972 / ATCC 24843) (Fission yeast).